Consider the following 64-residue polypeptide: Toxin BmCa-1 (64 aa).

The first 18 residues, 1 to 18 (MNTFVVVFLLLTAILCHA), serve as a signal peptide directing secretion. The propeptide occupies 19–27 (EHALDETAR). Intrachain disulfides connect Cys-29/Cys-43, Cys-36/Cys-49, and Cys-42/Cys-58.

It belongs to the scorpion calcin-like family. In terms of tissue distribution, expressed by the venom gland.

It localises to the secreted. Functionally, may increase intracellular calcium release through the activation of nuclear inositol 1,4,5-trisphosphate receptors (ITPR) of cardiomyocytes, thereby causing an increase in the contraction frequency of these cells. This is Toxin BmCa-1 from Olivierus martensii (Manchurian scorpion).